Reading from the N-terminus, the 103-residue chain is NAD(P)H-quinone oxidoreductase subunit 4L, organellar chromatophore (103 aa).

Helical transmembrane passes span 3-23, 32-52, and 63-83; these read IMLE…VWGL, VLMS…AFSN, and VFAI…LAIL.

The protein belongs to the complex I subunit 4L family. In terms of assembly, NDH is composed of at least 16 different subunits, 5 of which are encoded in the nucleus.

It is found in the plastid. Its subcellular location is the organellar chromatophore thylakoid membrane. The enzyme catalyses a plastoquinone + NADH + (n+1) H(+)(in) = a plastoquinol + NAD(+) + n H(+)(out). It carries out the reaction a plastoquinone + NADPH + (n+1) H(+)(in) = a plastoquinol + NADP(+) + n H(+)(out). Its function is as follows. NDH shuttles electrons from NAD(P)H:plastoquinone, via FMN and iron-sulfur (Fe-S) centers, to quinones in the photosynthetic chain and possibly in a chloroplast respiratory chain. The immediate electron acceptor for the enzyme in this species is believed to be plastoquinone. Couples the redox reaction to proton translocation, and thus conserves the redox energy in a proton gradient. In Paulinella chromatophora, this protein is NAD(P)H-quinone oxidoreductase subunit 4L, organellar chromatophore.